The primary structure comprises 610 residues: Tyrosine-protein kinase Drl (610 aa).

Positions 1–20 are cleaved as a signal peptide; it reads MAPNLLTIGLLLTLIASGQA. The Extracellular portion of the chain corresponds to 21 to 242; sequence HLNIFLNLHE…RENLVPPASG (222 aa). One can recognise a WIF domain in the interval 24–155; sequence IFLNLHEVLR…NLIFKRKKIC (132 aa). 3 N-linked (GlcNAc...) asparagine glycosylation sites follow: Asn-63, Asn-99, and Asn-143. The tract at residues 202–230 is disordered; the sequence is QAPEKQRPVVTESPVGRGNSGGSKRDFDP. Residues 243-263 traverse the membrane as a helical segment; it reads LVTLIVGGILALVLVSTLILI. At 264 to 610 the chain is on the cytoplasmic side; sequence AYCAKGPSKR…EFHTQITRYV (347 aa). The region spanning 343–606 is the Protein kinase domain; it reads VRLSCLVQEG…ICLSEFHTQI (264 aa). ATP-binding positions include 349–357 and Lys-371; that span reads VQEGNFGRI. Asp-468 serves as the catalytic Proton acceptor. Tyr-498 carries the post-translational modification Phosphotyrosine; by autocatalysis.

The protein belongs to the protein kinase superfamily. Tyr protein kinase family. In the embryonic abdominal hemisegment, expression is restricted to cell body, axon and growth cone of a cluster of 20 ventral nerve cord interneurons. During muscle growth and attachment events in the embryonic abdominal hemisegment, expression is in somatic muscle fibers 21-23 at 10-13 hours and 2 patches of approximately 15 neighboring epidermal cells (dorsal and ventral attachment sites) at 6-13 hours.

It is found in the cell membrane. The enzyme catalyses L-tyrosyl-[protein] + ATP = O-phospho-L-tyrosyl-[protein] + ADP + H(+). Functionally, probable coreceptor of Wnt proteins. Involved in neuronal pathway recognition and ventral muscle attachment site selection. Non-vital for development. May be part of a signal transduction cascade involved in learning and possibly memory. The sequence is that of Tyrosine-protein kinase Drl (drl) from Drosophila melanogaster (Fruit fly).